A 94-amino-acid chain; its full sequence is MFVDDNSLIIYSTWPSTLSDSSGRVIVMPDNRSFTFKEGFKLDESIKSILLVNPSSIDLLKIRVYKHRIKWMGDIFVLFEQENIPPPFRLVNDK.

This sequence belongs to the orthopoxvirus OPG142 family. Part of a complex composed of the kinase OPG054, OPG092, OPG100, OPG114, OPG115, OPG142 and OPG157.

It is found in the host cytoplasm. The protein resides in the virion. In terms of biological role, late protein which is a part of a large complex required for early virion morphogenesis. This complex participates in the formation of virosomes and the incorporation of virosomal contents into nascent immature virions. Required for the stability and kinase activity of OPG054. The polypeptide is Core protein OPG142 (OPG142) (Vaccinia virus (strain Ankara) (VACV)).